Consider the following 509-residue polypeptide: Maturase K (509 aa).

This sequence belongs to the intron maturase 2 family. MatK subfamily.

It is found in the plastid. Its subcellular location is the chloroplast. Usually encoded in the trnK tRNA gene intron. Probably assists in splicing its own and other chloroplast group II introns. This chain is Maturase K, found in Sequoia sempervirens (California redwood).